Here is a 56-residue protein sequence, read N- to C-terminus: Genome polyprotein (56 aa).

The segment at 1 to 30 (ETMLDRIASGDLESSVDDPRSAEDKRFESH) is disordered. The span at 17–30 (DDPRSAEDKRFESH) shows a compositional bias: basic and acidic residues.

It belongs to the picornaviridae polyprotein family. Homopentamer. Homooligomer. As to quaternary structure, interacts with capsid protein VP2. Interacts with capsid protein VP3. Post-translationally, specific enzymatic cleavages by viral protease in vivo yield a variety of precursors and mature proteins. Polyprotein processing intermediates are produced, such as P1-2A which is a functional precursor of the structural proteins, VP0 which is a VP4-VP2 precursor, VP1-2A precursor, 3ABC precursor which is a stable and catalytically active precursor of 3A, 3B and 3C proteins, 3AB and 3CD precursors. The assembly signal 2A is removed from VP1-2A by a host protease, possibly host Cathepsin L. This cleavage occurs over a region of 3 amino-acids probably generating VP1 proteins with heterogeneous C-termini. The assembly signal 2A is removed from VP1-2A by a host protease, possibly host Cathepsin L in naked virions. This cleavage does not occur in enveloped virions. This cleavage occurs over a region of 3 amino-acids probably generating VP1 proteins with heterogeneous C-termini.

The protein localises to the virion. It is found in the host endosome. Its subcellular location is the host multivesicular body. In terms of biological role, capsid proteins VP1, VP2, and VP3 form a closed capsid enclosing the viral positive strand RNA genome. All these proteins contain a beta-sheet structure called beta-barrel jelly roll. Together they form an icosahedral capsid (T=3) composed of 60 copies of each VP1, VP2, and VP3, with a diameter of approximately 300 Angstroms. VP1 is situated at the 12 fivefold axes, whereas VP2 and VP3 are located at the quasi-sixfold axes. The naked capsid interacts with the host receptor HAVCR1 to provide virion attachment to and probably entry into the target cell. Functionally, precursor component of immature procapsids that corresponds to an extended form of the structural protein VP1. After maturation, possibly by the host Cathepsin L, the assembly signal 2A is cleaved to give rise to the mature VP1 protein. The polypeptide is Genome polyprotein (Callithrix (Owl-faced monkey)).